The sequence spans 202 residues: Outer-membrane lipoprotein LolB (202 aa).

An N-terminal signal peptide occupies residues 1–18 (MFRRTYFWLMLLPLFMVG). C19 carries the N-palmitoyl cysteine lipid modification. C19 carries S-diacylglycerol cysteine lipidation.

It belongs to the LolB family. Monomer.

It is found in the cell outer membrane. Functionally, plays a critical role in the incorporation of lipoproteins in the outer membrane after they are released by the LolA protein. The protein is Outer-membrane lipoprotein LolB of Vibrio vulnificus (strain YJ016).